The following is a 557-amino-acid chain: MVLSDIEIANSVTMEPISKVADQLGIDKEALCLYGKYKAKIDARQLVALKDKPDGKLILVTAISPTPAGEGKTTTSVGLVDALSAIGKKAVIALREPSLGPVFGVKGGAAGGGHAQVVPMEDINLHFTGDFHAIGVANNLLAALIDNHIHHGNSLGIDSRRITWKRVVDMNDRQLRHIVDGLQGKVNGVPREDGYDITVASEIMAILCLSENISDLKARLEKIIIGYNFQGEPVTAKDLKAGGALAALLKDAIHPNLVQTLEHTPALIHGGPFANIAHGCNSVLATKLALKYGDYAVTEAGFGADLGAEKFIDIKCRMSGLRPAAVVLVATIRALKMHGGVPKADLATENVQAVVDGLPNLDKHLANIQDVYGLPVVVAINKFPLDTDAELQAVYDACDKRGVDVVISDVWANGGAGGRELAEKVVALAEQDNQFRFVYEEDDSIETKLTKIVTKVYGGKGIKLTPTAKRELAELERLGFGNYPICMAKTQYSFSDDAKKLGAPTDFIVTISNLKVSAGAGFIVALTGAIMTMPGLPKVPASETIDIDEEGNITGLF.

An ATP-binding site is contributed by 66–73; the sequence is TPAGEGKT.

Belongs to the formate--tetrahydrofolate ligase family.

It catalyses the reaction (6S)-5,6,7,8-tetrahydrofolate + formate + ATP = (6R)-10-formyltetrahydrofolate + ADP + phosphate. The protein operates within one-carbon metabolism; tetrahydrofolate interconversion. The protein is Formate--tetrahydrofolate ligase 2 of Streptococcus pyogenes serotype M5 (strain Manfredo).